The sequence spans 320 residues: Lipoyl synthase (320 aa).

The span at 1-29 (MIGKLVRDLKIPDQRHPEKAHRPDNDQPR) shows a compositional bias: basic and acidic residues. The interval 1–32 (MIGKLVRDLKIPDQRHPEKAHRPDNDQPRKPS) is disordered. Positions 60, 65, 71, 86, 90, 93, and 300 each coordinate [4Fe-4S] cluster. The Radical SAM core domain maps to 71–289 (CWGQGHATMM…EKAAYGKGFL (219 aa)).

It belongs to the radical SAM superfamily. Lipoyl synthase family. It depends on [4Fe-4S] cluster as a cofactor.

It is found in the cytoplasm. It carries out the reaction [[Fe-S] cluster scaffold protein carrying a second [4Fe-4S](2+) cluster] + N(6)-octanoyl-L-lysyl-[protein] + 2 oxidized [2Fe-2S]-[ferredoxin] + 2 S-adenosyl-L-methionine + 4 H(+) = [[Fe-S] cluster scaffold protein] + N(6)-[(R)-dihydrolipoyl]-L-lysyl-[protein] + 4 Fe(3+) + 2 hydrogen sulfide + 2 5'-deoxyadenosine + 2 L-methionine + 2 reduced [2Fe-2S]-[ferredoxin]. Its pathway is protein modification; protein lipoylation via endogenous pathway; protein N(6)-(lipoyl)lysine from octanoyl-[acyl-carrier-protein]: step 2/2. Functionally, catalyzes the radical-mediated insertion of two sulfur atoms into the C-6 and C-8 positions of the octanoyl moiety bound to the lipoyl domains of lipoate-dependent enzymes, thereby converting the octanoylated domains into lipoylated derivatives. The polypeptide is Lipoyl synthase (Cereibacter sphaeroides (strain ATCC 17025 / ATH 2.4.3) (Rhodobacter sphaeroides)).